Reading from the N-terminus, the 394-residue chain is Acetyl-CoA acetyltransferase (394 aa).

Cys-89 serves as the catalytic Acyl-thioester intermediate. Catalysis depends on proton acceptor residues His-350 and Cys-380.

It belongs to the thiolase-like superfamily. Thiolase family. In terms of assembly, homotetramer.

The protein localises to the cytoplasm. The enzyme catalyses 2 acetyl-CoA = acetoacetyl-CoA + CoA. It participates in biopolymer metabolism; poly-(R)-3-hydroxybutanoate biosynthesis. The protein operates within metabolic intermediate biosynthesis; (R)-mevalonate biosynthesis; (R)-mevalonate from acetyl-CoA: step 1/3. This chain is Acetyl-CoA acetyltransferase, found in Allochromatium vinosum (strain ATCC 17899 / DSM 180 / NBRC 103801 / NCIMB 10441 / D) (Chromatium vinosum).